A 496-amino-acid chain; its full sequence is Maturase K (496 aa).

It belongs to the intron maturase 2 family. MatK subfamily.

It localises to the plastid. It is found in the chloroplast. Functionally, usually encoded in the trnK tRNA gene intron. Probably assists in splicing its own and other chloroplast group II introns. The sequence is that of Maturase K from Paeonia officinalis (Common peony).